The sequence spans 307 residues: Replication termination factor 2 (307 aa).

The disordered stretch occupies residues 193 to 296; that stretch reads AKLEKKTKKP…SSAKRSKEES (104 aa). The segment covering 227–241 has biased composition (basic and acidic residues); it reads GKPEEADPDPREKKS. Position 288 is a phosphoserine (Ser288).

This sequence belongs to the rtf2 family. Interacts with DDI2; probably also interacts with DDI1. Post-translationally, undergoes proteasomal degradation, via DDI1 and DDI2. Removal from stalled replisomes and degradation are required for genome stability.

It localises to the chromosome. Functionally, replication termination factor which is a component of the elongating replisome. Required for ATR pathway signaling upon DNA damage and has a positive activity during DNA replication. Might function to facilitate fork pausing at replication fork barriers like the rDNA. May be globally required to stimulate ATR signaling after the fork stalls or encounters a lesion. Interacts with nascent DNA. This chain is Replication termination factor 2, found in Mus musculus (Mouse).